We begin with the raw amino-acid sequence, 559 residues long: Glypican-1 (559 aa).

Positions 1 to 23 (MELRARGWWLLYAAAVLVACARG) are cleaved as a signal peptide. Cystine bridges form between C32–C68, C62–C256, C69–C259, C191–C343, C246–C279, C268–C415, and C272–C401. N-linked (GlcNAc...) asparagine glycosylation is found at N79 and N116. Residues 478 to 539 (FQDASDDGSG…SAAAPTPPQA (62 aa)) form a disordered region. Residues S486, S488, and S490 are each glycosylated (O-linked (Xyl...) (heparan sulfate) serine). S530 carries the GPI-anchor amidated serine lipid modification. Positions 531 to 559 (AAAPTPPQASPLLLLGLALALPAVAPRGR) are cleaved as a propeptide — removed in mature form.

It belongs to the glypican family. S-nitrosylated in a Cu(2+)-dependent manner. Nitric acid (NO) is released from the nitrosylated cysteines by ascorbate or by some other reducing agent, in a Cu(2+) or Zn(2+) dependent manner. This free nitric oxide is then capable of cleaving the heparan sulfate side chains. Post-translationally, N- and O-glycosylated. N-glycosylation is mainly of the complex type containing sialic acid. O-glycosylated with heparan sulfate. The heparan sulfate chains can be cleaved either by the action of heparanase or, degraded by a deaminative process that uses nitric oxide (NO) released from the S-nitrosylated cysteines. This process is triggered by ascorbate, or by some other reducing agent, in a Cu(2+)- or Zn(2+) dependent manner. Cu(2+) ions are provided by ceruloproteins such as APP, PRNP or CP which associate with GCP1 in intracellular compartments or lipid rafts. In terms of processing, shed from the cell surface probably by further cleavage.

It localises to the cell membrane. Its subcellular location is the endosome. It is found in the secreted. The protein localises to the extracellular space. Functionally, cell surface proteoglycan that bears heparan sulfate. Binds, via the heparan sulfate side chains, alpha-4 (V) collagen and participates in Schwann cell myelination. May act as a catalyst in increasing the rate of conversion of prion protein PRPN (C) to PRNP (Sc) via associating (via the heparan sulfate side chains) with both forms of PRPN, targeting them to lipid rafts and facilitating their interaction. Required for proper skeletal muscle differentiation by sequestering FGF2 in lipid rafts preventing its binding to receptors (FGFRs) and inhibiting the FGF-mediated signaling. The sequence is that of Glypican-1 (GPC1) from Bos taurus (Bovine).